A 257-amino-acid chain; its full sequence is Neuroendocrine secretory protein 55 (257 aa).

Residues 1 to 46 (MDRRSRAQQWRRARHNYNDLCPPIGRRAATALLWLSCSIALLRALA) form the signal peptide. The interval 61-257 (SFLNAHHRSA…RKGPIPIRRH (197 aa)) is disordered. Residues 70-82 (AAAAAAAQVLPES) are compositionally biased toward low complexity. Over residues 86–103 (ESDHEHEEVEPELARPEC) the composition is skewed to basic and acidic residues. Residues 104 to 139 (LEYDQDDYETETDSETEPESDIESETEIETEPETEP) show a composition bias toward acidic residues. Residues 200-211 (EPQRGPLDQDPR) show a composition bias toward basic and acidic residues. The span at 227–237 (PRRCKTRRPAR) shows a compositional bias: basic residues.

This sequence belongs to the NESP55 family. Binds keratan sulfate chains. In terms of processing, may be proteolytically processed to give rise to a number of active peptides.

It localises to the cytoplasmic vesicle. Its subcellular location is the secretory vesicle. The protein localises to the secreted. This Mus musculus (Mouse) protein is Neuroendocrine secretory protein 55.